Consider the following 272-residue polypeptide: Sulfur carrier protein FdhD (272 aa).

Cysteine 114 serves as the catalytic Cysteine persulfide intermediate.

This sequence belongs to the FdhD family.

It is found in the cytoplasm. Required for formate dehydrogenase (FDH) activity. Acts as a sulfur carrier protein that transfers sulfur from IscS to the molybdenum cofactor prior to its insertion into FDH. The chain is Sulfur carrier protein FdhD from Mycolicibacterium paratuberculosis (strain ATCC BAA-968 / K-10) (Mycobacterium paratuberculosis).